We begin with the raw amino-acid sequence, 911 residues long: DNA replication licensing factor mcm4 (911 aa).

The segment at 1–132 is disordered; that stretch reads MSSSQQSGRA…RPGVSTPSSL (132 aa). Residues serine 37, serine 38, and serine 41 each carry the phosphoserine modification. Low complexity predominate over residues 42–56; it reads TRLTTPRTTARTPLA. Residues 63-84 show a composition bias toward polar residues; sequence ESSSPGPNIPQSSRSHLLSQRN. Phosphoserine is present on serine 92. Residues 493 to 702 enclose the MCM domain; that stretch reads IYDILSRSLA…LDRKLANHIV (210 aa). An ATP-binding site is contributed by 545-552; the sequence is GDPSTSKS. Positions 677–680 match the Arginine finger motif; sequence SRFD.

Belongs to the MCM family. Component of the mcm2-7 complex. The complex forms a toroidal hexameric ring with the proposed subunit order mcm2-mcm6-mcm4-mcm7-mcm3-mcm5. The heterodimers of mcm4/mcm6 and mcm3/mcm5 interact with mcm2 and mcm7.

It is found in the nucleus. The catalysed reaction is ATP + H2O = ADP + phosphate + H(+). Its function is as follows. Acts as a component of the mcm2-7 complex (mcm complex) which is the putative replicative helicase essential for 'once per cell cycle' DNA replication initiation and elongation in eukaryotic cells. The active ATPase sites in the mcm2-7 ring are formed through the interaction surfaces of two neighboring subunits such that a critical structure of a conserved arginine finger motif is provided in trans relative to the ATP-binding site of the Walker A box of the adjacent subunit. The six ATPase active sites, however, are likely to contribute differentially to the complex helicase activity. Required for S phase execution. The polypeptide is DNA replication licensing factor mcm4 (mcm4) (Schizosaccharomyces pombe (strain 972 / ATCC 24843) (Fission yeast)).